We begin with the raw amino-acid sequence, 138 residues long: PilB-specific inhibitory protein CpiA (138 aa).

Interacts with PilB but not with TfpB.

In terms of biological role, acts as a PilB inhibitor to control natural transformation. Inhibits type IV pili (T4P) extension by specifically binding and inhibiting the pilus extension ATPase PilB but not TfpB. This activity probably modulates T4P extension under different environmental conditions. This chain is PilB-specific inhibitory protein CpiA, found in Acinetobacter baylyi (strain ATCC 33305 / BD413 / ADP1).